The sequence spans 462 residues: Zinc transporter 6-B (462 aa).

The Cytoplasmic portion of the chain corresponds to 1–33 (MGTIYLFRKTQRSLLGKLTQEFRLVTADRRSWK). A helical membrane pass occupies residues 34 to 54 (ILLFGAINVVCTGFLLTWCSS). Topologically, residues 55–64 (TNSMALTAYT) are extracellular. A helical transmembrane segment spans residues 65–85 (YLTIFDLFSLITSLISYWVMM). The Cytoplasmic segment spans residues 86–98 (KKPSPTYSFGFER). The chain crosses the membrane as a helical span at residues 99-119 (LEVLAVFASTVLAQLGALFIL). Residues 120 to 134 (KESAERFLEQPEIHT) lie on the Extracellular side of the membrane. The helical transmembrane segment at 135-155 (GRLLVGTFVALFFNLFTMLSI) threads the bilayer. The Cytoplasmic portion of the chain corresponds to 156 to 200 (RNKPFAYVSEAASTSWLQEHVADLSRSLCGVIPGLSSIFLPRMNP). The chain crosses the membrane as a helical span at residues 201–221 (FVLIDIAGALALCITYMLIEI). At 222 to 223 (NN) the chain is on the extracellular side. The chain crosses the membrane as a helical span at residues 224 to 244 (YFAVDTASAIAIAVMTFGTMY). The Cytoplasmic portion of the chain corresponds to 245–462 (PMSVYSGKVL…TPGQFTQFRQ (218 aa)).

The protein belongs to the cation diffusion facilitator (CDF) transporter (TC 2.A.4) family. SLC30A subfamily. As to quaternary structure, heterodimer with SLC30A5; form a functional zinc ion transmembrane transporter.

It is found in the golgi apparatus. Its subcellular location is the trans-Golgi network membrane. Its function is as follows. Has probably no intrinsic transporter activity but together with SLC30A5 forms a functional zinc ion:proton antiporter heterodimer, mediating zinc entry into the lumen of organelles along the secretory pathway. As part of that zinc ion:proton antiporter, contributes to zinc ion homeostasis within the early secretory pathway and regulates the activation and folding of enzymes like alkaline phosphatases and enzymes involved in phosphatidylinositol glycan anchor biosynthesis. The protein is Zinc transporter 6-B (slc30a6-b) of Xenopus laevis (African clawed frog).